A 121-amino-acid chain; its full sequence is Small ribosomal subunit protein uS13 (121 aa).

Residues 91–121 are disordered; the sequence is HRMSLPVRGQRTRTNARTRRGSRKTVAGRKK. Residues 100-121 show a composition bias toward basic residues; sequence QRTRTNARTRRGSRKTVAGRKK.

This sequence belongs to the universal ribosomal protein uS13 family. In terms of assembly, part of the 30S ribosomal subunit. Forms a loose heterodimer with protein S19. Forms two bridges to the 50S subunit in the 70S ribosome.

Located at the top of the head of the 30S subunit, it contacts several helices of the 16S rRNA. In the 70S ribosome it contacts the 23S rRNA (bridge B1a) and protein L5 of the 50S subunit (bridge B1b), connecting the 2 subunits; these bridges are implicated in subunit movement. Contacts the tRNAs in the A and P-sites. The protein is Small ribosomal subunit protein uS13 of Prochlorococcus marinus (strain MIT 9312).